The sequence spans 542 residues: Tubby-related protein 1 (542 aa).

The tract at residues 1–289 is disordered; it reads MPLRDETLRE…RAPSPPVEVD (289 aa). Over residues 91–104 the composition is skewed to basic and acidic residues; that stretch reads FLRDPEAKKRDPRE. Residues 114-132 show a composition bias toward acidic residues; that stretch reads AEDEEEEEEEDEEDEEEEA. The span at 146 to 157 shows a compositional bias: basic and acidic residues; that stretch reads PLREKSSADLKE. Basic residues predominate over residues 262-275; the sequence is SNQKGKAKGKGKKK.

The protein belongs to the TUB family. As to quaternary structure, homodimer. May interact with ABCF1, PSIP1, ZEB1 and HMGB2 (Potential). Interacts with DNM1. Interacts with F-actin. Interacts with TUB. Interacts with TYRO3. Retina-specific.

The protein resides in the cytoplasm. It is found in the cell membrane. It localises to the secreted. Its subcellular location is the synapse. Functionally, required for normal development of photoreceptor synapses. Required for normal photoreceptor function and for long-term survival of photoreceptor cells. Interacts with cytoskeleton proteins and may play a role in protein transport in photoreceptor cells. Binds lipids, especially phosphatidylinositol 3-phosphate, phosphatidylinositol 4-phosphate, phosphatidylinositol 5-phosphate, phosphatidylinositol 3,4-bisphosphate, phosphatidylinositol 4,5-bisphosphate, phosphatidylinositol 3,4,5-bisphosphate, phosphatidylserine and phosphatidic acid (in vitro). Contribute to stimulation of phagocytosis of apoptotic retinal pigment epithelium (RPE) cells and macrophages. This is Tubby-related protein 1 (TULP1) from Homo sapiens (Human).